A 310-amino-acid polypeptide reads, in one-letter code: 2-dehydropantoate 2-reductase (310 aa).

NADP(+) contacts are provided by residues 9–14 (GVGAIG) and Asn100. A substrate-binding site is contributed by Asn100. The Proton donor role is filled by Lys184. Residues Asn188, Asn192, and Ser259 each coordinate substrate. Residue Glu270 participates in NADP(+) binding.

This sequence belongs to the ketopantoate reductase family.

The protein resides in the cytoplasm. The enzyme catalyses (R)-pantoate + NADP(+) = 2-dehydropantoate + NADPH + H(+). It functions in the pathway cofactor biosynthesis; (R)-pantothenate biosynthesis; (R)-pantoate from 3-methyl-2-oxobutanoate: step 2/2. Its function is as follows. Catalyzes the NADPH-dependent reduction of ketopantoate into pantoic acid. This Aquifex aeolicus (strain VF5) protein is 2-dehydropantoate 2-reductase.